The chain runs to 412 residues: MQTSILIKSSCRPQFQRRFHHRMQKQIQNIISILSSASVINSYDENDIRHSKPLLVQMDCNYNGYVAGIPNSLVTLSVCSGLRGTMQLKNISYGIEPMEAVSGFIHKIYEEKYADTNILLEENDTYTWFNSEYQVRKSSEKTDFIKLFPRYIEMHIVVDKNLFKPANMICRKSVGKECDFTEYCNGDLPYCLPDTYVRDGEYCDSGGAFCFQGKCRTFDKQCDDLIGRGSRGAPVFCYDEINTRGDNFGNCGTAHCLFQHILCGKLVCTWEHRDLISRPNLSVIYAHVRDQTCVSTYLPRRTPPPVNSPISITSYYSAEDRDETFVQDGSMCGPDMYCFEMHCKHVRFLMNLKLCDASNHCDRHGVCNNFNHCHCEKGYNPPYCQPKQGAFGSIDDGHLVPPTERSYMEEGR.

The 89-residue stretch at 111–199 (EKYADTNILL…YCLPDTYVRD (89 aa)) folds into the Disintegrin domain. An EGF-like domain is found at 351–385 (NLKLCDASNHCDRHGVCNNFNHCHCEKGYNPPYCQ).

As to quaternary structure, interacts with TEX101. In terms of tissue distribution, highly expressed in testis.

Functionally, this is a non catalytic metalloprotease-like protein. The polypeptide is Putative disintegrin and metalloproteinase domain-containing protein 5 (ADAM5) (Homo sapiens (Human)).